Here is a 445-residue protein sequence, read N- to C-terminus: UPF0761 membrane protein Mlg_0521 (445 aa).

Helical transmembrane passes span 56-76 (LLALVPLLTIGLSIFAAFPVF), 112-132 (GLTVVGLLALMVSALLMMAAI), 152-172 (FMVYWTVLTLAPILMGASLGI), 195-215 (LLAGMPFVAETVAFTFLYAAV), 225-245 (ALLGGLLAAALFEAAKGGFGW), and 259-279 (ALAALPIFLIWLYLSWVVVLV).

It belongs to the UPF0761 family.

It localises to the cell inner membrane. The protein is UPF0761 membrane protein Mlg_0521 of Alkalilimnicola ehrlichii (strain ATCC BAA-1101 / DSM 17681 / MLHE-1).